The sequence spans 227 residues: MTARPLNELVEPGWARALQPVAEQVARMGQFLRAEIAAGRRYLPAGPNVLRAFTYPFDEVKVLIVGQDPYPTPGHAVGLSFSVAPDVSPLPRSLANIFQEYTADLGHPPPSCGDLTPWAQRGVLLLNRVLTVRPSNPASHRGKGWEPVTECAIRALTARQQPLVAILWGRDASTLKPILAQGNCVAIESPHPSPLSASRGFFGSRPFSRANKLLAEMGADEIDWRLP.

Asp68 serves as the catalytic Proton acceptor.

Belongs to the uracil-DNA glycosylase (UDG) superfamily. UNG family.

It localises to the cytoplasm. It catalyses the reaction Hydrolyzes single-stranded DNA or mismatched double-stranded DNA and polynucleotides, releasing free uracil.. Excises uracil residues from the DNA which can arise as a result of misincorporation of dUMP residues by DNA polymerase or due to deamination of cytosine. This Mycolicibacterium paratuberculosis (strain ATCC BAA-968 / K-10) (Mycobacterium paratuberculosis) protein is Uracil-DNA glycosylase.